We begin with the raw amino-acid sequence, 270 residues long: Formamidopyrimidine-DNA glycosylase (270 aa).

Proline 2 functions as the Schiff-base intermediate with DNA in the catalytic mechanism. Catalysis depends on glutamate 3, which acts as the Proton donor. Lysine 58 acts as the Proton donor; for beta-elimination activity in catalysis. Residues histidine 91, arginine 110, and arginine 151 each coordinate DNA. An FPG-type zinc finger spans residues 236-270 (LVYGRDGLPCPNCGRALKHATIGQRASVWCSHCQR). Arginine 260 (proton donor; for delta-elimination activity) is an active-site residue.

It belongs to the FPG family. In terms of assembly, monomer. Zn(2+) serves as cofactor.

It carries out the reaction Hydrolysis of DNA containing ring-opened 7-methylguanine residues, releasing 2,6-diamino-4-hydroxy-5-(N-methyl)formamidopyrimidine.. It catalyses the reaction 2'-deoxyribonucleotide-(2'-deoxyribose 5'-phosphate)-2'-deoxyribonucleotide-DNA = a 3'-end 2'-deoxyribonucleotide-(2,3-dehydro-2,3-deoxyribose 5'-phosphate)-DNA + a 5'-end 5'-phospho-2'-deoxyribonucleoside-DNA + H(+). Its function is as follows. Involved in base excision repair of DNA damaged by oxidation or by mutagenic agents. Acts as a DNA glycosylase that recognizes and removes damaged bases. Has a preference for oxidized purines, such as 7,8-dihydro-8-oxoguanine (8-oxoG). Has AP (apurinic/apyrimidinic) lyase activity and introduces nicks in the DNA strand. Cleaves the DNA backbone by beta-delta elimination to generate a single-strand break at the site of the removed base with both 3'- and 5'-phosphates. The protein is Formamidopyrimidine-DNA glycosylase of Stenotrophomonas maltophilia (strain K279a).